Consider the following 230-residue polypeptide: Cytidylate kinase (230 aa).

11–19 (GPAAAGKST) contacts ATP.

It belongs to the cytidylate kinase family. Type 1 subfamily.

Its subcellular location is the cytoplasm. The enzyme catalyses CMP + ATP = CDP + ADP. It carries out the reaction dCMP + ATP = dCDP + ADP. The polypeptide is Cytidylate kinase (Oceanobacillus iheyensis (strain DSM 14371 / CIP 107618 / JCM 11309 / KCTC 3954 / HTE831)).